Consider the following 222-residue polypeptide: Coiled-coil domain-containing protein 70 (222 aa).

Coiled coils occupy residues 34–62 and 129–188; these read LQEE…WNFR and NALW…KAAW.

The protein is Coiled-coil domain-containing protein 70 (CCDC70) of Bos taurus (Bovine).